Consider the following 339-residue polypeptide: Phosphate acyltransferase (339 aa).

It belongs to the PlsX family. Homodimer. Probably interacts with PlsY.

The protein localises to the cytoplasm. It carries out the reaction a fatty acyl-[ACP] + phosphate = an acyl phosphate + holo-[ACP]. It functions in the pathway lipid metabolism; phospholipid metabolism. Functionally, catalyzes the reversible formation of acyl-phosphate (acyl-PO(4)) from acyl-[acyl-carrier-protein] (acyl-ACP). This enzyme utilizes acyl-ACP as fatty acyl donor, but not acyl-CoA. The chain is Phosphate acyltransferase from Clostridium perfringens (strain ATCC 13124 / DSM 756 / JCM 1290 / NCIMB 6125 / NCTC 8237 / Type A).